Here is a 279-residue protein sequence, read N- to C-terminus: uncharacterized protein (279 aa).

Disordered regions lie at residues 50 to 109 (YTYN…YNKN) and 249 to 279 (SQSQPSSFSSSSSSSSIQLSPSPSSSSSPKL). A compositionally biased stretch (low complexity) spans 68-109 (NNNSNYNNNNNNNNNNNNNNNNNNNNNNNKNNNNNNYNYNKN).

This is an uncharacterized protein from Dictyostelium discoideum (Social amoeba).